The chain runs to 103 residues: Large ribosomal subunit protein bL21 (103 aa).

Belongs to the bacterial ribosomal protein bL21 family. Part of the 50S ribosomal subunit. Contacts protein L20.

Its function is as follows. This protein binds to 23S rRNA in the presence of protein L20. This Borreliella afzelii (strain PKo) (Borrelia afzelii) protein is Large ribosomal subunit protein bL21.